We begin with the raw amino-acid sequence, 195 residues long: dITP/XTP pyrophosphatase (195 aa).

Substrate is bound at residue 8 to 13 (SNNQGK). Mg(2+) contacts are provided by Glu-39 and Asp-68. The active-site Proton acceptor is the Asp-68. Residues Ser-69, 149 to 152 (FGYD), Lys-172, and 177 to 178 (HR) each bind substrate.

The protein belongs to the HAM1 NTPase family. As to quaternary structure, homodimer. It depends on Mg(2+) as a cofactor.

The enzyme catalyses XTP + H2O = XMP + diphosphate + H(+). It catalyses the reaction dITP + H2O = dIMP + diphosphate + H(+). The catalysed reaction is ITP + H2O = IMP + diphosphate + H(+). Pyrophosphatase that catalyzes the hydrolysis of nucleoside triphosphates to their monophosphate derivatives, with a high preference for the non-canonical purine nucleotides XTP (xanthosine triphosphate), dITP (deoxyinosine triphosphate) and ITP. Seems to function as a house-cleaning enzyme that removes non-canonical purine nucleotides from the nucleotide pool, thus preventing their incorporation into DNA/RNA and avoiding chromosomal lesions. The chain is dITP/XTP pyrophosphatase from Staphylococcus aureus (strain MRSA252).